Consider the following 399-residue polypeptide: Elongation factor Tu 1 (399 aa).

The region spanning 17–208 (KPHVNVGTIG…LDDYVEVPPR (192 aa)) is the tr-type G domain. Residues 26-33 (GHVDHGKT) form a G1 region. 26-33 (GHVDHGKT) serves as a coordination point for GTP. Thr-33 contacts Mg(2+). A G2 region spans residues 62 to 66 (GITIA). Residues 83 to 86 (DCPG) form a G3 region. Residues 83–87 (DCPGH) and 138–141 (NKAD) each bind GTP. The interval 138–141 (NKAD) is G4. The interval 175 to 177 (SAL) is G5.

It belongs to the TRAFAC class translation factor GTPase superfamily. Classic translation factor GTPase family. EF-Tu/EF-1A subfamily. As to quaternary structure, monomer.

The protein resides in the cytoplasm. It carries out the reaction GTP + H2O = GDP + phosphate + H(+). GTP hydrolase that promotes the GTP-dependent binding of aminoacyl-tRNA to the A-site of ribosomes during protein biosynthesis. In Wolbachia sp. subsp. Brugia malayi (strain TRS), this protein is Elongation factor Tu 1.